A 239-amino-acid chain; its full sequence is 1-(5-phosphoribosyl)-5-[(5-phosphoribosylamino)methylideneamino] imidazole-4-carboxamide isomerase (239 aa).

Asp8 acts as the Proton acceptor in catalysis. The Proton donor role is filled by Asp129.

This sequence belongs to the HisA/HisF family.

It localises to the cytoplasm. It catalyses the reaction 1-(5-phospho-beta-D-ribosyl)-5-[(5-phospho-beta-D-ribosylamino)methylideneamino]imidazole-4-carboxamide = 5-[(5-phospho-1-deoxy-D-ribulos-1-ylimino)methylamino]-1-(5-phospho-beta-D-ribosyl)imidazole-4-carboxamide. The protein operates within amino-acid biosynthesis; L-histidine biosynthesis; L-histidine from 5-phospho-alpha-D-ribose 1-diphosphate: step 4/9. In Cereibacter sphaeroides (strain ATCC 17025 / ATH 2.4.3) (Rhodobacter sphaeroides), this protein is 1-(5-phosphoribosyl)-5-[(5-phosphoribosylamino)methylideneamino] imidazole-4-carboxamide isomerase.